The primary structure comprises 1155 residues: Probable translation initiation factor IF-2 (1155 aa).

The DOD-type homing endonuclease domain occupies 237–367 (FAGVMFGDGC…LSILLLRFEI (131 aa)). Residues 561 to 781 (TTETHNFIAN…VAGLAQKFLE (221 aa)) form the tr-type G domain. GTP contacts are provided by residues 634 to 638 (DTPGH) and 688 to 691 (NKID).

This sequence belongs to the TRAFAC class translation factor GTPase superfamily. Classic translation factor GTPase family. IF-2 subfamily. In terms of processing, this protein undergoes a protein self splicing that involves a post-translational excision of the intervening region (intein) followed by peptide ligation.

In terms of biological role, function in general translation initiation by promoting the binding of the formylmethionine-tRNA to ribosomes. Seems to function along with eIF-2. This chain is Probable translation initiation factor IF-2 (infB), found in Methanocaldococcus jannaschii (strain ATCC 43067 / DSM 2661 / JAL-1 / JCM 10045 / NBRC 100440) (Methanococcus jannaschii).